We begin with the raw amino-acid sequence, 247 residues long: DNA polymerase sliding clamp 1 (247 aa).

This sequence belongs to the PCNA family. Heterotrimer. The subunits circularize to form a toroid; DNA passes through its center. Replication factor C (RFC) is required to load the toroid on the DNA.

Functionally, sliding clamp subunit that acts as a moving platform for DNA processing. Responsible for tethering the catalytic subunit of DNA polymerase and other proteins to DNA during high-speed replication. This is DNA polymerase sliding clamp 1 from Aeropyrum pernix (strain ATCC 700893 / DSM 11879 / JCM 9820 / NBRC 100138 / K1).